The sequence spans 561 residues: Glutamine--tRNA ligase (561 aa).

Positions 34-44 (PEPNGYLHIGH) match the 'HIGH' region motif. ATP-binding positions include 35–37 (EPN) and 41–47 (HIGHAKS). The L-glutamine site is built by Asp-67 and Tyr-212. ATP is bound by residues Thr-231, 261–262 (RL), and 269–271 (MSK). The 'KMSKS' region motif lies at 268–272 (VMSKR).

This sequence belongs to the class-I aminoacyl-tRNA synthetase family. Monomer.

Its subcellular location is the cytoplasm. It catalyses the reaction tRNA(Gln) + L-glutamine + ATP = L-glutaminyl-tRNA(Gln) + AMP + diphosphate. This chain is Glutamine--tRNA ligase, found in Idiomarina loihiensis (strain ATCC BAA-735 / DSM 15497 / L2-TR).